Consider the following 254-residue polypeptide: 4-hydroxy-tetrahydrodipicolinate reductase (254 aa).

NAD(+)-binding positions include 8–13 (GASGKM), 87–89 (GTT), and 111–114 (ATNM). His-143 serves as the catalytic Proton donor/acceptor. His-144 provides a ligand contact to (S)-2,3,4,5-tetrahydrodipicolinate. The active-site Proton donor is Lys-147. A (S)-2,3,4,5-tetrahydrodipicolinate-binding site is contributed by 153–154 (GT).

It belongs to the DapB family.

It is found in the cytoplasm. It carries out the reaction (S)-2,3,4,5-tetrahydrodipicolinate + NAD(+) + H2O = (2S,4S)-4-hydroxy-2,3,4,5-tetrahydrodipicolinate + NADH + H(+). It catalyses the reaction (S)-2,3,4,5-tetrahydrodipicolinate + NADP(+) + H2O = (2S,4S)-4-hydroxy-2,3,4,5-tetrahydrodipicolinate + NADPH + H(+). Its pathway is amino-acid biosynthesis; L-lysine biosynthesis via DAP pathway; (S)-tetrahydrodipicolinate from L-aspartate: step 4/4. Its function is as follows. Catalyzes the conversion of 4-hydroxy-tetrahydrodipicolinate (HTPA) to tetrahydrodipicolinate. The protein is 4-hydroxy-tetrahydrodipicolinate reductase of Campylobacter curvus (strain 525.92).